Here is a 653-residue protein sequence, read N- to C-terminus: DUF21 domain-containing protein At1g55930, chloroplastic (653 aa).

Residues 1–72 (MELDLSVLGR…DFSHRCQFVV (72 aa)) constitute a chloroplast transit peptide. The next 5 membrane-spanning stretches (helical) occupy residues 103–123 (GIVL…KVLA), 157–177 (GLIL…ETSI), 208–228 (FLTT…ALVT), 234–254 (IFGE…ILLL), and 280–300 (WLSL…MGIL). The CNNM transmembrane domain maps to 149 to 335 (VLKVLREQGL…ELSGAIEEEE (187 aa)). CBS domains follow at residues 354 to 415 (MTPL…LLES) and 421 to 479 (MAHK…IFDE).

It is found in the plastid. The protein resides in the chloroplast membrane. In Arabidopsis thaliana (Mouse-ear cress), this protein is DUF21 domain-containing protein At1g55930, chloroplastic (CBSDUFCH2).